The chain runs to 348 residues: Dihydroorotase (348 aa).

Zn(2+)-binding residues include histidine 17 and histidine 19. Substrate is bound by residues 19-21 (HLR) and asparagine 45. Zn(2+) contacts are provided by lysine 103, histidine 140, and histidine 178. N6-carboxylysine is present on lysine 103. Residue histidine 140 participates in substrate binding. A substrate-binding site is contributed by leucine 223. Aspartate 251 contributes to the Zn(2+) binding site. Aspartate 251 is a catalytic residue. Residues histidine 255 and alanine 267 each coordinate substrate.

Belongs to the metallo-dependent hydrolases superfamily. DHOase family. Class II DHOase subfamily. As to quaternary structure, homodimer. Zn(2+) serves as cofactor.

The catalysed reaction is (S)-dihydroorotate + H2O = N-carbamoyl-L-aspartate + H(+). Its pathway is pyrimidine metabolism; UMP biosynthesis via de novo pathway; (S)-dihydroorotate from bicarbonate: step 3/3. Functionally, catalyzes the reversible cyclization of carbamoyl aspartate to dihydroorotate. This is Dihydroorotase from Escherichia coli O7:K1 (strain IAI39 / ExPEC).